The primary structure comprises 463 residues: Mitochondrial dynamics protein MID51 (463 aa).

The Mitochondrial intermembrane segment spans residues 1-23 (MAGAGERKGKKDDNGIGTAIDFV). A helical transmembrane segment spans residues 24-46 (LSNARLVLGVGGAAMLGIATLAV). Residues 47–463 (KRMYDRAISA…LSEPEVLLQT (417 aa)) are Cytoplasmic-facing. The interval 49–195 (MYDRAISAPT…LSGSLYDDLQ (147 aa)) is dimerization. Serine 55, serine 59, serine 79, and serine 94 each carry phosphoserine. The disordered stretch occupies residues 57–79 (PTSPTRLSHSGKRSWEEPNWMGS). The tract at residues 104-123 (AFDTDTFCPPRPKPVARKGQ) is disordered. Residues 160 to 169 (AAVDICAELR) are important for interaction with DNM1L. Positions 187, 189, and 201 each coordinate ADP. Positions 234-243 (RRENPEYFPR) are important for interaction with DNM1L. 3 residues coordinate ADP: serine 340, arginine 342, and lysine 368.

This sequence belongs to the MID49/MID51 family. Homodimer. Interacts with DNM1L.

The protein localises to the mitochondrion outer membrane. Functionally, mitochondrial outer membrane protein which regulates mitochondrial fission/fusion dynamics. Promotes the recruitment and association of the fission mediator dynamin-related protein 1 (DNM1L) to the mitochondrial surface independently of the mitochondrial fission FIS1 and MFF proteins. Regulates DNM1L GTPase activity and DNM1L oligomerization. Binds ADP and can also bind GDP, although with lower affinity. Does not bind CDP, UDP, ATP, AMP or GTP. Inhibits DNM1L GTPase activity in the absence of bound ADP. Requires ADP to stimulate DNM1L GTPase activity and the assembly of DNM1L into long, oligomeric tubules with a spiral pattern, as opposed to the ring-like DNM1L oligomers observed in the absence of bound ADP. Does not require ADP for its function in recruiting DNM1L. This is Mitochondrial dynamics protein MID51 (MIEF1) from Pongo abelii (Sumatran orangutan).